The following is a 750-amino-acid chain: Glutathione biosynthesis bifunctional protein GshAB (750 aa).

The tract at residues 1–333 is glutamate--cysteine ligase; the sequence is MIIDRLLQRS…EANRLNDLIA (333 aa). The disordered stretch occupies residues 32-51; the sequence is QPTQRVAQTPHPKTLGSRNY. Positions 489–747 constitute an ATP-grasp domain; the sequence is KKILDEKHFP…ITPRILAKLF (259 aa). 516–574 is a binding site for ATP; it reads SQIQDKPIVVKPKSTNFGLGISIFKTSANLASYEKAIDIAFTEDSAILVEEYIEGTEYR. Positions 696, 717, and 719 each coordinate Mg(2+). 3 residues coordinate Mn(2+): aspartate 696, glutamate 717, and asparagine 719.

In the N-terminal section; belongs to the glutamate--cysteine ligase type 1 family. Type 2 subfamily. As to quaternary structure, monomer. Requires Mg(2+) as cofactor. The cofactor is Mn(2+).

It carries out the reaction L-cysteine + L-glutamate + ATP = gamma-L-glutamyl-L-cysteine + ADP + phosphate + H(+). The catalysed reaction is gamma-L-glutamyl-L-cysteine + glycine + ATP = glutathione + ADP + phosphate + H(+). It participates in sulfur metabolism; glutathione biosynthesis; glutathione from L-cysteine and L-glutamate: step 1/2. It functions in the pathway sulfur metabolism; glutathione biosynthesis; glutathione from L-cysteine and L-glutamate: step 2/2. In terms of biological role, synthesizes glutathione from L-glutamate and L-cysteine via gamma-L-glutamyl-L-cysteine. The chain is Glutathione biosynthesis bifunctional protein GshAB from Streptococcus agalactiae serotype III (strain NEM316).